Consider the following 247-residue polypeptide: Fasciclin-like arabinogalactan protein 13 (247 aa).

Residues 1 to 25 (MATTPLLLLLLTAVFLSTEITAQRA) form the signal peptide. In terms of domain architecture, FAS1 spans 34–179 (PINITAILEK…LAVYVVDMVL (146 aa)). 5 N-linked (GlcNAc...) asparagine glycosylation sites follow: Asn-36, Asn-55, Asn-68, Asn-141, and Asn-150. The disordered stretch occupies residues 189-228 (KISPMAPPPKSKSPDVSDDSESSKKAAAPSESEKSGSGEM). Gly-224 is lipidated: GPI-anchor amidated glycine. A propeptide spans 225-247 (SGEMNTGLGLGLGLVVLCLKFLL) (removed in mature form).

Belongs to the fasciclin-like AGP family.

Its subcellular location is the cell membrane. May be a cell surface adhesion protein. The protein is Fasciclin-like arabinogalactan protein 13 (FLA13) of Arabidopsis thaliana (Mouse-ear cress).